Consider the following 711-residue polypeptide: Polyribonucleotide nucleotidyltransferase (711 aa).

Mg(2+) is bound by residues Asp-491 and Asp-497. The KH domain maps to 559–618; it reads PRLITIKINPEKIRDVIGKGGAVIRALTEETGTQIDISDEGVVTIASVDAAAGQEAKRRI. The region spanning 628 to 696 is the S1 motif domain; the sequence is GKIYEGTVLK…DRGRLKLSMK (69 aa).

It belongs to the polyribonucleotide nucleotidyltransferase family. Requires Mg(2+) as cofactor.

It is found in the cytoplasm. It catalyses the reaction RNA(n+1) + phosphate = RNA(n) + a ribonucleoside 5'-diphosphate. Its function is as follows. Involved in mRNA degradation. Catalyzes the phosphorolysis of single-stranded polyribonucleotides processively in the 3'- to 5'-direction. In Janthinobacterium sp. (strain Marseille) (Minibacterium massiliensis), this protein is Polyribonucleotide nucleotidyltransferase.